Reading from the N-terminus, the 147-residue chain is UPF0306 protein YhbP (147 aa).

Belongs to the UPF0306 family.

In Shigella dysenteriae serotype 1 (strain Sd197), this protein is UPF0306 protein YhbP.